The sequence spans 678 residues: Endoplasmic reticulum membrane-associated RNA degradation protein (678 aa).

The next 2 membrane-spanning stretches (helical) occupy residues 390 to 410 and 587 to 607; these read LLAF…LSVF and VLSL…AVCG.

Its subcellular location is the endoplasmic reticulum membrane. Its function is as follows. May play a role in neuronal migration during embryonic development. This is Endoplasmic reticulum membrane-associated RNA degradation protein (ERMARD) from Homo sapiens (Human).